A 696-amino-acid chain; its full sequence is C2 domain-containing protein 2 (696 aa).

A helical membrane pass occupies residues 8-28; the sequence is VQWLFLVSLFVAALGTVGLYL. The SMP-LBD domain occupies 45 to 238; it reads EPDELRRRES…PTQVKEAQSL (194 aa). Position 54 is a phosphoserine (S54). A C2 domain is found at 241–357; sequence PSSTAQEPCP…RKQPNGPQTF (117 aa). A Phosphoserine modification is found at S436. T440 is modified (phosphothreonine). Positions 551–611 are disordered; sequence ATEASATTPP…DGDELSESSL (61 aa). Basic and acidic residues predominate over residues 573–588; that stretch reads KPRENDLDSWELEKES. Phosphoserine is present on S581.

It localises to the membrane. The chain is C2 domain-containing protein 2 from Mus musculus (Mouse).